The primary structure comprises 317 residues: Methionyl-tRNA formyltransferase (317 aa).

112–115 (SLLP) is a (6S)-5,6,7,8-tetrahydrofolate binding site.

This sequence belongs to the Fmt family.

The enzyme catalyses L-methionyl-tRNA(fMet) + (6R)-10-formyltetrahydrofolate = N-formyl-L-methionyl-tRNA(fMet) + (6S)-5,6,7,8-tetrahydrofolate + H(+). Its function is as follows. Attaches a formyl group to the free amino group of methionyl-tRNA(fMet). The formyl group appears to play a dual role in the initiator identity of N-formylmethionyl-tRNA by promoting its recognition by IF2 and preventing the misappropriation of this tRNA by the elongation apparatus. The chain is Methionyl-tRNA formyltransferase from Histophilus somni (strain 2336) (Haemophilus somnus).